Consider the following 211-residue polypeptide: Transcription antitermination protein NusB (211 aa).

Belongs to the NusB family.

Functionally, involved in transcription antitermination. Required for transcription of ribosomal RNA (rRNA) genes. Binds specifically to the boxA antiterminator sequence of the ribosomal RNA (rrn) operons. The sequence is that of Transcription antitermination protein NusB from Trichormus variabilis (strain ATCC 29413 / PCC 7937) (Anabaena variabilis).